The chain runs to 618 residues: UvrABC system protein C (618 aa).

One can recognise a GIY-YIG domain in the interval 15 to 93 (RTPGVYLMKD…IKEHHPRYNI (79 aa)). Residues 203–238 (NNLLRELRERMKMAAEQMNYEEAAFLRDRIRAIEET) enclose the UVR domain.

This sequence belongs to the UvrC family. As to quaternary structure, interacts with UvrB in an incision complex.

Its subcellular location is the cytoplasm. In terms of biological role, the UvrABC repair system catalyzes the recognition and processing of DNA lesions. UvrC both incises the 5' and 3' sides of the lesion. The N-terminal half is responsible for the 3' incision and the C-terminal half is responsible for the 5' incision. This Syntrophus aciditrophicus (strain SB) protein is UvrABC system protein C.